The sequence spans 575 residues: Proline--tRNA ligase (575 aa).

The protein belongs to the class-II aminoacyl-tRNA synthetase family. ProS type 1 subfamily. Homodimer.

Its subcellular location is the cytoplasm. It carries out the reaction tRNA(Pro) + L-proline + ATP = L-prolyl-tRNA(Pro) + AMP + diphosphate. Its function is as follows. Catalyzes the attachment of proline to tRNA(Pro) in a two-step reaction: proline is first activated by ATP to form Pro-AMP and then transferred to the acceptor end of tRNA(Pro). As ProRS can inadvertently accommodate and process non-cognate amino acids such as alanine and cysteine, to avoid such errors it has two additional distinct editing activities against alanine. One activity is designated as 'pretransfer' editing and involves the tRNA(Pro)-independent hydrolysis of activated Ala-AMP. The other activity is designated 'posttransfer' editing and involves deacylation of mischarged Ala-tRNA(Pro). The misacylated Cys-tRNA(Pro) is not edited by ProRS. The chain is Proline--tRNA ligase from Solidesulfovibrio magneticus (strain ATCC 700980 / DSM 13731 / RS-1) (Desulfovibrio magneticus).